The sequence spans 313 residues: L-2-hydroxycarboxylate dehydrogenase (NAD(P)(+)) (313 aa).

Residues 7 to 13 (GASGRVG) and 34 to 37 (REHS) contribute to the NADP(+) site. 2 residues coordinate substrate: R86 and R92. Residues N99 and 121–123 (ITN) each bind NADP(+). Substrate-binding residues include N123 and R154. The Proton acceptor role is filled by H178.

This sequence belongs to the LDH/MDH superfamily. As to quaternary structure, homotetramer.

The protein localises to the cytoplasm. It carries out the reaction a (2S)-2-hydroxycarboxylate + NAD(+) = a 2-oxocarboxylate + NADH + H(+). The enzyme catalyses a (2S)-2-hydroxycarboxylate + NADP(+) = a 2-oxocarboxylate + NADPH + H(+). In terms of biological role, catalyzes the reversible oxidation of (S)-malate and (S)-sulfolactate to oxaloacetate and sulfopyruvate, respectively. Can use both NADH and NADPH, although activity is higher with NADPH. Oxidation of (S)-sulfolactate is observed only in the presence of NADP(+). Can also oxidize tartrate. Cannot reduce pyruvate, nor alpha-ketoglutarate. The sequence is that of L-2-hydroxycarboxylate dehydrogenase (NAD(P)(+)) (mdh) from Methanocaldococcus jannaschii (strain ATCC 43067 / DSM 2661 / JAL-1 / JCM 10045 / NBRC 100440) (Methanococcus jannaschii).